Consider the following 90-residue polypeptide: MARTVNCIKLGREAEGLDFPPYPGPLGQRIFEHVSKEAWQQWIKMQTMIINENRLNLVDAKHRKYLAEQVEKHFFGEGADQIQGYVPPAA.

The protein belongs to the Fe(2+)-trafficking protein family.

In terms of biological role, could be a mediator in iron transactions between iron acquisition and iron-requiring processes, such as synthesis and/or repair of Fe-S clusters in biosynthetic enzymes. The sequence is that of Probable Fe(2+)-trafficking protein from Dechloromonas aromatica (strain RCB).